Here is a 430-residue protein sequence, read N- to C-terminus: Enolase (430 aa).

Residue Gln-167 participates in (2R)-2-phosphoglycerate binding. The active-site Proton donor is Glu-209. Mg(2+) is bound by residues Asp-246, Glu-289, and Asp-316. (2R)-2-phosphoglycerate-binding residues include Lys-341, Arg-370, Ser-371, and Lys-392. Lys-341 (proton acceptor) is an active-site residue.

Belongs to the enolase family. Component of the RNA degradosome, a multiprotein complex involved in RNA processing and mRNA degradation. Mg(2+) is required as a cofactor.

It is found in the cytoplasm. The protein resides in the secreted. Its subcellular location is the cell surface. It catalyses the reaction (2R)-2-phosphoglycerate = phosphoenolpyruvate + H2O. The protein operates within carbohydrate degradation; glycolysis; pyruvate from D-glyceraldehyde 3-phosphate: step 4/5. Catalyzes the reversible conversion of 2-phosphoglycerate (2-PG) into phosphoenolpyruvate (PEP). It is essential for the degradation of carbohydrates via glycolysis. This Alcanivorax borkumensis (strain ATCC 700651 / DSM 11573 / NCIMB 13689 / SK2) protein is Enolase.